The following is a 382-amino-acid chain: Bifunctional enzyme IspD/IspF (382 aa).

The segment at 1–226 (MTLAVLIVAA…RSTMDNIPDI (226 aa)) is 2-C-methyl-D-erythritol 4-phosphate cytidylyltransferase. A 2-C-methyl-D-erythritol 2,4-cyclodiphosphate synthase region spans residues 227-382 (RLGNGYDVHR…ALATATLVRA (156 aa)). A divalent metal cation-binding residues include D233 and H235. 4-CDP-2-C-methyl-D-erythritol 2-phosphate-binding positions include 233–235 (DVH) and 259–260 (HS). H267 contributes to the a divalent metal cation binding site. 4-CDP-2-C-methyl-D-erythritol 2-phosphate contacts are provided by residues 281–283 (DIG), 357–360 (TTSE), F364, and R367.

In the N-terminal section; belongs to the IspD/TarI cytidylyltransferase family. IspD subfamily. The protein in the C-terminal section; belongs to the IspF family. It depends on a divalent metal cation as a cofactor.

The catalysed reaction is 2-C-methyl-D-erythritol 4-phosphate + CTP + H(+) = 4-CDP-2-C-methyl-D-erythritol + diphosphate. The enzyme catalyses 4-CDP-2-C-methyl-D-erythritol 2-phosphate = 2-C-methyl-D-erythritol 2,4-cyclic diphosphate + CMP. The protein operates within isoprenoid biosynthesis; isopentenyl diphosphate biosynthesis via DXP pathway; isopentenyl diphosphate from 1-deoxy-D-xylulose 5-phosphate: step 2/6. Its pathway is isoprenoid biosynthesis; isopentenyl diphosphate biosynthesis via DXP pathway; isopentenyl diphosphate from 1-deoxy-D-xylulose 5-phosphate: step 4/6. In terms of biological role, bifunctional enzyme that catalyzes the formation of 4-diphosphocytidyl-2-C-methyl-D-erythritol from CTP and 2-C-methyl-D-erythritol 4-phosphate (MEP) (IspD), and catalyzes the conversion of 4-diphosphocytidyl-2-C-methyl-D-erythritol 2-phosphate (CDP-ME2P) to 2-C-methyl-D-erythritol 2,4-cyclodiphosphate (ME-CPP) with a corresponding release of cytidine 5-monophosphate (CMP) (IspF). The chain is Bifunctional enzyme IspD/IspF from Ruegeria sp. (strain TM1040) (Silicibacter sp.).